We begin with the raw amino-acid sequence, 226 residues long: ATP-dependent dethiobiotin synthetase BioD (226 aa).

13–18 (DVGKTV) contacts ATP. Residue T17 participates in Mg(2+) binding. K38 is an active-site residue. Residues D55, 116–119 (EGAG), and 176–177 (NR) contribute to the ATP site. Residues D55 and E116 each contribute to the Mg(2+) site.

Belongs to the dethiobiotin synthetase family. Homodimer. Mg(2+) is required as a cofactor.

The protein localises to the cytoplasm. The catalysed reaction is (7R,8S)-7,8-diammoniononanoate + CO2 + ATP = (4R,5S)-dethiobiotin + ADP + phosphate + 3 H(+). The protein operates within cofactor biosynthesis; biotin biosynthesis; biotin from 7,8-diaminononanoate: step 1/2. Catalyzes a mechanistically unusual reaction, the ATP-dependent insertion of CO2 between the N7 and N8 nitrogen atoms of 7,8-diaminopelargonic acid (DAPA, also called 7,8-diammoniononanoate) to form a ureido ring. This chain is ATP-dependent dethiobiotin synthetase BioD, found in Aliivibrio fischeri (strain MJ11) (Vibrio fischeri).